A 43-amino-acid chain; its full sequence is Protein PsbN (43 aa).

The chain crosses the membrane as a helical span at residues 7–27 (IAIFISCLIVSFTGYALYTAF).

It belongs to the PsbN family.

It is found in the plastid. The protein localises to the chloroplast thylakoid membrane. Its function is as follows. May play a role in photosystem I and II biogenesis. The protein is Protein PsbN of Psilotum nudum (Whisk fern).